Reading from the N-terminus, the 479-residue chain is 6-phosphogluconate dehydrogenase, decarboxylating (479 aa).

Residues 10–15 (GLAVMG), 33–35 (NRS), 75–77 (IKA), and asparagine 103 each bind NADP(+). Residues asparagine 103 and 129–131 (SGG) each bind substrate. The active-site Proton acceptor is the lysine 183. 186–187 (HN) is a substrate binding site. The active-site Proton donor is the glutamate 190. Tyrosine 191, lysine 260, arginine 287, arginine 447, and histidine 453 together coordinate substrate.

This sequence belongs to the 6-phosphogluconate dehydrogenase family. In terms of assembly, homodimer.

It carries out the reaction 6-phospho-D-gluconate + NADP(+) = D-ribulose 5-phosphate + CO2 + NADPH. It participates in carbohydrate degradation; pentose phosphate pathway; D-ribulose 5-phosphate from D-glucose 6-phosphate (oxidative stage): step 3/3. Catalyzes the oxidative decarboxylation of 6-phosphogluconate to ribulose 5-phosphate and CO(2), with concomitant reduction of NADP to NADPH. The sequence is that of 6-phosphogluconate dehydrogenase, decarboxylating (gnd) from Chlamydia muridarum (strain MoPn / Nigg).